A 305-amino-acid chain; its full sequence is Probable xyloglucan endotransglucosylase/hydrolase protein 8 (305 aa).

Positions 1–31 (METERRIITSCSAMTALFLFMTALMASSSIA) are cleaved as a signal peptide. The region spanning 32–231 (ATPTQSFEDN…WKKAPFVSSY (200 aa)) is the GH16 domain. Residues Asn61 and Asn66 are each glycosylated (N-linked (GlcNAc...) asparagine). The active-site Nucleophile is Glu115. The Proton donor role is filled by Glu119. A xyloglucan-binding site is contributed by Glu119. Residue Asn123 is glycosylated (N-linked (GlcNAc...) asparagine). Residue 132 to 134 (QTN) coordinates xyloglucan. The N-linked (GlcNAc...) asparagine glycan is linked to Asn138. Residues 142 to 144 (NRE), 210 to 211 (DW), and Gly215 each bind xyloglucan. Intrachain disulfides connect Cys239-Cys248 and Cys286-Cys299. Arg291 serves as a coordination point for xyloglucan.

The protein belongs to the glycosyl hydrolase 16 family. XTH group 1 subfamily. In terms of processing, contains at least one intrachain disulfide bond essential for its enzymatic activity.

The protein resides in the secreted. The protein localises to the cell wall. It localises to the extracellular space. Its subcellular location is the apoplast. It catalyses the reaction breaks a beta-(1-&gt;4) bond in the backbone of a xyloglucan and transfers the xyloglucanyl segment on to O-4 of the non-reducing terminal glucose residue of an acceptor, which can be a xyloglucan or an oligosaccharide of xyloglucan.. Functionally, catalyzes xyloglucan endohydrolysis (XEH) and/or endotransglycosylation (XET). Cleaves and religates xyloglucan polymers, an essential constituent of the primary cell wall, and thereby participates in cell wall construction of growing tissues. In Arabidopsis thaliana (Mouse-ear cress), this protein is Probable xyloglucan endotransglucosylase/hydrolase protein 8 (XTH8).